Here is a 383-residue protein sequence, read N- to C-terminus: Trihelix transcription factor ASIL1 (383 aa).

Disordered stretches follow at residues 1–32 (MEDD…LPTN), 61–94 (HTPS…DDCW), 189–295 (IASS…SGVG), and 346–383 (EITQ…NVSS). Residues 66 to 88 (TGGGGSGNRNGRGGGGGSGGGGG) are compositionally biased toward gly residues. The Myb-like domain maps to 94–153 (WSEEATKVLIEAWGDRFSEPGKGTLKQQHWKEVAEIVNKSRQCKYPKTDIQCKNRIDTVK). The segment covering 206 to 225 (NSRSSMFKRQTKGNQIVQQQ) has biased composition (polar residues). Residues 226-235 (QEKRGSDSMR) show a composition bias toward basic and acidic residues. Positions 228–241 (KRGSDSMRWHFRKR) match the Bipartite nuclear localization signal motif. A compositionally biased stretch (acidic residues) spans 246–262 (TESESDPEPEASPEESA). The span at 263–274 (ESLPPLQPIQPL) shows a compositional bias: low complexity. Residues 304–365 (FTEAYEKAET…ERSRQRGERR (62 aa)) are a coiled coil. Over residues 356–367 (ERSRQRGERRIV) the composition is skewed to basic and acidic residues.

It localises to the nucleus. Its function is as follows. Transcription repressor that binds specific DNA sequence such as the GT-box-like motif 5'-CGTGATT-3' in the AT2S3 promoter. Negative regulator of seed maturation genes during seed germination and seedling development. May target GT-box-containing embryonic genes by competing with the binding of transcriptional activators to this promoter region. Contributes to the maintenance and control of seed filling and may repress the maturation program during early embryogenesis. The sequence is that of Trihelix transcription factor ASIL1 from Arabidopsis thaliana (Mouse-ear cress).